A 397-amino-acid polypeptide reads, in one-letter code: uncharacterized protein (397 aa).

Transmembrane regions (helical) follow at residues 2–24 (LNLL…PGIH), 44–66 (YIPF…SAFL), 92–114 (AIVL…SLFL), 124–143 (AFYC…FILY), 150–169 (SVWE…AVLY), 173–195 (AFNI…INNL), 255–277 (FIVS…VIFI), 297–319 (INTA…LNLS), 331–350 (FKFL…IIGS), and 354–373 (YLIY…LLAV).

The protein resides in the cell membrane. This is an uncharacterized protein from Methanocaldococcus jannaschii (strain ATCC 43067 / DSM 2661 / JAL-1 / JCM 10045 / NBRC 100440) (Methanococcus jannaschii).